The following is a 255-amino-acid chain: 5'-nucleotidase SurE (255 aa).

A divalent metal cation contacts are provided by Asp8, Asp9, Ser40, and Asn92.

The protein belongs to the SurE nucleotidase family. It depends on a divalent metal cation as a cofactor.

Its subcellular location is the cytoplasm. The enzyme catalyses a ribonucleoside 5'-phosphate + H2O = a ribonucleoside + phosphate. Its function is as follows. Nucleotidase that shows phosphatase activity on nucleoside 5'-monophosphates. The chain is 5'-nucleotidase SurE from Brucella suis (strain ATCC 23445 / NCTC 10510).